A 366-amino-acid chain; its full sequence is MSHNTFGHLFRVTTFGESHGVAIGCVVDGCPPQLALTVEEIQRDLDRRRPGQSRFTTQRQEADQVKILSGVMETASGQVTTGAPIALLIENTDQRSKDYSEIKDKFRPGHADFTYEAKYGLRDYRGGGRSSARETATRVAAGAIARKIVPGVTVRGALVQMGPHRIDREKWDWNEIARNPFFCPDKDKAAFFESYLDGIRKSGSSIGAVIEVVAEGVPAGLGAPIYAKLDGDLAAALMSINAVKGVEIGAGFGAAELSGEDNADEMRSSSSNMGNNGPVFLSNHAGGILGGISTGQPVVARFAVKPTSSILSPRKTVDRNGADTDIFTKGRHDPCVGIRAVPVGEAMVACVLADHFLRHRGQVGPR.

The NADP(+) site is built by Arg-48 and Arg-54. Residues 129–131, 241–242, Gly-290, 305–309, and Arg-331 contribute to the FMN site; these read RSS, NA, and KPTSS.

Belongs to the chorismate synthase family. As to quaternary structure, homotetramer. It depends on FMNH2 as a cofactor.

The catalysed reaction is 5-O-(1-carboxyvinyl)-3-phosphoshikimate = chorismate + phosphate. It functions in the pathway metabolic intermediate biosynthesis; chorismate biosynthesis; chorismate from D-erythrose 4-phosphate and phosphoenolpyruvate: step 7/7. Functionally, catalyzes the anti-1,4-elimination of the C-3 phosphate and the C-6 proR hydrogen from 5-enolpyruvylshikimate-3-phosphate (EPSP) to yield chorismate, which is the branch point compound that serves as the starting substrate for the three terminal pathways of aromatic amino acid biosynthesis. This reaction introduces a second double bond into the aromatic ring system. The polypeptide is Chorismate synthase (Nitrobacter hamburgensis (strain DSM 10229 / NCIMB 13809 / X14)).